We begin with the raw amino-acid sequence, 220 residues long: Deoxyribose-phosphate aldolase 2 (220 aa).

Residue D89 is the Proton donor/acceptor of the active site. K151 (schiff-base intermediate with acetaldehyde) is an active-site residue. The active-site Proton donor/acceptor is K180.

Belongs to the DeoC/FbaB aldolase family. DeoC type 1 subfamily.

It localises to the cytoplasm. The enzyme catalyses 2-deoxy-D-ribose 5-phosphate = D-glyceraldehyde 3-phosphate + acetaldehyde. It participates in carbohydrate degradation; 2-deoxy-D-ribose 1-phosphate degradation; D-glyceraldehyde 3-phosphate and acetaldehyde from 2-deoxy-alpha-D-ribose 1-phosphate: step 2/2. Functionally, catalyzes a reversible aldol reaction between acetaldehyde and D-glyceraldehyde 3-phosphate to generate 2-deoxy-D-ribose 5-phosphate. This Staphylococcus aureus (strain MRSA252) protein is Deoxyribose-phosphate aldolase 2.